Reading from the N-terminus, the 332-residue chain is Casein kinase II subunit alpha (332 aa).

In terms of domain architecture, Protein kinase spans 43-327; it reads YEIIRKVGRG…TCQEAMAHPY (285 aa). Residues 49 to 57 and K72 contribute to the ATP site; that span reads VGRGKYSEV. D160 (proton acceptor) is an active-site residue.

This sequence belongs to the protein kinase superfamily. Ser/Thr protein kinase family. CK2 subfamily. Tetramer composed of two alpha chains, one beta chain and one beta' chain.

The catalysed reaction is L-seryl-[protein] + ATP = O-phospho-L-seryl-[protein] + ADP + H(+). It catalyses the reaction L-threonyl-[protein] + ATP = O-phospho-L-threonyl-[protein] + ADP + H(+). Its function is as follows. Catalytic subunit of a constitutively active serine/threonine-protein kinase complex that phosphorylates a large number of substrates containing acidic residues C-terminal to the phosphorylated serine or threonine. The polypeptide is Casein kinase II subunit alpha (Schizosaccharomyces pombe (strain 972 / ATCC 24843) (Fission yeast)).